The following is a 369-amino-acid chain: DNA replication and repair protein RecF (369 aa).

G30 to T37 provides a ligand contact to ATP.

Belongs to the RecF family.

It is found in the cytoplasm. Its function is as follows. The RecF protein is involved in DNA metabolism; it is required for DNA replication and normal SOS inducibility. RecF binds preferentially to single-stranded, linear DNA. It also seems to bind ATP. The sequence is that of DNA replication and repair protein RecF from Pseudomonas aeruginosa (strain LESB58).